Consider the following 680-residue polypeptide: ABC transporter B family member 24, mitochondrial (680 aa).

The N-terminal 75 residues, 1-75 (MMRVSQLQLC…MFFSTSTSAP (75 aa)), are a transit peptide targeting the mitochondrion. Residues 108–402 (VISAFACLVG…LGVVYSDTVQ (295 aa)) form the ABC transmembrane type-1 domain. 6 helical membrane-spanning segments follow: residues 109 to 129 (ISAF…PFLF), 145 to 165 (NPYL…YGIA), 232 to 252 (AMVF…CILA), 255 to 275 (FGAV…AFTL), 340 to 360 (FALL…TAMV), and 376 to 396 (LVMV…LGVV). The region spanning 439-673 (ISFENVHFSY…SGRYAKLWTQ (235 aa)) is the ABC transporter domain. Residues Tyr-448 and 472–483 (GSSGSGKSTILR) each bind ATP.

The protein belongs to the ABC transporter superfamily. ABCB family. Heavy Metal importer (TC 3.A.1.210) subfamily. Homodimer. Mostly expressed at low levels in roots and flowers.

It is found in the mitochondrion inner membrane. Its function is as follows. Performs an essential function in the generation of cytoplasmic iron-sulfur proteins by mediating export of Fe/S cluster precursors synthesized by NFS1 and other mitochondrial proteins. Not involved in the export of cyclic pyranopterin monophosphate (cPMP) from mitochondria to the cytosol. This is ABC transporter B family member 24, mitochondrial (ABCB24) from Arabidopsis thaliana (Mouse-ear cress).